The chain runs to 211 residues: Transcription antitermination protein NusB (211 aa).

It belongs to the NusB family.

Involved in transcription antitermination. Required for transcription of ribosomal RNA (rRNA) genes. Binds specifically to the boxA antiterminator sequence of the ribosomal RNA (rrn) operons. The polypeptide is Transcription antitermination protein NusB (Trichormus variabilis (strain ATCC 29413 / PCC 7937) (Anabaena variabilis)).